The following is a 256-amino-acid chain: Major prion protein (256 aa).

The N-terminal stretch at methionine 1 to cysteine 24 is a signal peptide. Residues lysine 25–alanine 233 are interaction with GRB2, ERI3 and SYN1. The tract at residues proline 28–threonine 110 is disordered. 5 tandem repeats follow at residues proline 54–glutamine 62, proline 63–glutamine 70, proline 71–glutamine 78, proline 79–glutamine 86, and proline 87–glutamine 95. A 5 X 8 AA tandem repeats of P-H-G-G-G-W-G-Q region spans residues proline 54–glutamine 95. Gly residues predominate over residues glutamine 55 to glycine 97. Residues histidine 64, glycine 65, glycine 66, histidine 72, glycine 73, glycine 74, histidine 80, glycine 81, glycine 82, histidine 88, glycine 90, and glycine 91 each contribute to the Cu(2+) site. The cysteines at positions 182 and 217 are disulfide-linked. N-linked (GlcNAc...) asparagine glycans are attached at residues asparagine 184 and asparagine 200. The GPI-anchor amidated alanine moiety is linked to residue alanine 233. Positions serine 234–glycine 256 are cleaved as a propeptide — removed in mature form.

This sequence belongs to the prion family. As to quaternary structure, monomer and homodimer. Has a tendency to aggregate into amyloid fibrils containing a cross-beta spine, formed by a steric zipper of superposed beta-strands. Soluble oligomers may represent an intermediate stage on the path to fibril formation. Copper binding may promote oligomerization. Interacts with GRB2, APP, ERI3/PRNPIP and SYN1. Mislocalized cytosolically exposed PrP interacts with MGRN1; this interaction alters MGRN1 subcellular location and causes lysosomal enlargement. Interacts with KIAA1191.

It localises to the cell membrane. The protein resides in the golgi apparatus. In terms of biological role, its primary physiological function is unclear. Has cytoprotective activity against internal or environmental stresses. May play a role in neuronal development and synaptic plasticity. May be required for neuronal myelin sheath maintenance. May play a role in iron uptake and iron homeostasis. Soluble oligomers are toxic to cultured neuroblastoma cells and induce apoptosis (in vitro). Association with GPC1 (via its heparan sulfate chains) targets PRNP to lipid rafts. Also provides Cu(2+) or Zn(2+) for the ascorbate-mediated GPC1 deaminase degradation of its heparan sulfate side chains. In Capra hircus (Goat), this protein is Major prion protein (PRNP).